Reading from the N-terminus, the 424-residue chain is Histidine--tRNA ligase (424 aa).

It belongs to the class-II aminoacyl-tRNA synthetase family. As to quaternary structure, homodimer.

It is found in the cytoplasm. It carries out the reaction tRNA(His) + L-histidine + ATP = L-histidyl-tRNA(His) + AMP + diphosphate + H(+). This Desulfitobacterium hafniense (strain DSM 10664 / DCB-2) protein is Histidine--tRNA ligase.